A 234-amino-acid chain; its full sequence is UPF0502 protein Bphyt_5265 (234 aa).

It belongs to the UPF0502 family.

The sequence is that of UPF0502 protein Bphyt_5265 from Paraburkholderia phytofirmans (strain DSM 17436 / LMG 22146 / PsJN) (Burkholderia phytofirmans).